The chain runs to 417 residues: MEQIKDIFKQVRQAKGSLAFCKEEIINDTLYALADRVEAATDRILEENAKDLAAMDPSNPKYDRLKLTAERIHAIAQGIRQVATLPSPSGRILSEAVRPNGMKLTKVSVPFGVIGIIYEARPNVTLDVFALCFKSGNACILKGGSDADFSNRILVEIIRNTLLDVAHLSPYLVALLPAGHDSADALLHARGYVDLIIPRGGKGLIDYVRQNATIPVIETGAGVCHVYFDKEGDVAKGAAIIRNAKTRRVSVCNALDCLIIDVNRLTDLSTLCSGLQQDNVEIYADDLCYNYLKTSYPSHLLKHASTDTFGTEFLDYKMAVTATMTIQAAVAHISIYGSGHSECIVTENDRAADYFMKMVDAACVYVNVPTSFTDGGEFGLGAEIGISTQKLHARGPMGLEELNTYKWIIQGDGQIRQ.

The protein belongs to the gamma-glutamyl phosphate reductase family.

The protein resides in the cytoplasm. It catalyses the reaction L-glutamate 5-semialdehyde + phosphate + NADP(+) = L-glutamyl 5-phosphate + NADPH + H(+). Its pathway is amino-acid biosynthesis; L-proline biosynthesis; L-glutamate 5-semialdehyde from L-glutamate: step 2/2. Functionally, catalyzes the NADPH-dependent reduction of L-glutamate 5-phosphate into L-glutamate 5-semialdehyde and phosphate. The product spontaneously undergoes cyclization to form 1-pyrroline-5-carboxylate. This Phocaeicola vulgatus (strain ATCC 8482 / DSM 1447 / JCM 5826 / CCUG 4940 / NBRC 14291 / NCTC 11154) (Bacteroides vulgatus) protein is Gamma-glutamyl phosphate reductase.